We begin with the raw amino-acid sequence, 2883 residues long: Bifunctional DNA-directed RNA polymerase subunit beta-beta' (2883 aa).

The tract at residues 1–1377 is DNA-directed RNA polymerase subunit beta; sequence MPTTLKSGNR…DVTVYGETEE (1377 aa). The segment at 1382 to 2883 is DNA-directed RNA polymerase subunit beta'; that stretch reads PMPIKEDDRP…IRIKEKTEGA (1502 aa). Cys-1447, Cys-1449, Cys-1462, and Cys-1465 together coordinate Zn(2+). Positions 1846, 1848, and 1850 each coordinate Mg(2+). Zn(2+) contacts are provided by Cys-2176, Cys-2250, Cys-2257, and Cys-2260.

The protein in the N-terminal section; belongs to the RNA polymerase beta chain family. In the C-terminal section; belongs to the RNA polymerase beta' chain family. The RNAP catalytic core consists of 2 alpha, 1 beta/beta' and 1 omega subunit. When a sigma factor is associated with the core the holoenzyme is formed, which can initiate transcription. Mg(2+) serves as cofactor. Zn(2+) is required as a cofactor.

It carries out the reaction RNA(n) + a ribonucleoside 5'-triphosphate = RNA(n+1) + diphosphate. Its function is as follows. DNA-dependent RNA polymerase catalyzes the transcription of DNA into RNA using the four ribonucleoside triphosphates as substrates. In Wolinella succinogenes (strain ATCC 29543 / DSM 1740 / CCUG 13145 / JCM 31913 / LMG 7466 / NCTC 11488 / FDC 602W) (Vibrio succinogenes), this protein is Bifunctional DNA-directed RNA polymerase subunit beta-beta' (rpoBC).